We begin with the raw amino-acid sequence, 1894 residues long: MKAMPWNWTCLLSHLLMVGMGSSTLLTRQPAPLSQKQRSFVTFRGEPAEGFNHLVVDERTGHIYLGAVNRIYKLSSDLKVLVTHETGPDEDNPKCYPPRIVQTCNEPLTTTNNVNKMLLIDYKENRLIACGSLYQGICKLLRLEDLFKLGEPYHKKEHYLSGVNESGSVFGVIVSYSNLDDKLFIATAVDGKPEYFPTISSRKLTKNSEADGMFAYVFHDEFVASMIKIPSDTFTIIPDFDIYYVYGFSSGNFVYFLTLQPEMVSPPGSTTKEQVYTSKLVRLCKEDTAFNSYVEVPIGCERSGVEYRLLQAAYLSKAGAVLGRTLGVHPDDDLLFTVFSKGQKRKMKSLDESALCIFILKQINDRIKERLQSCYRGEGTLDLAWLKVKDIPCSSALLTIDDNFCGLDMNAPLGVSDMVRGIPVFTEDRDRMTSVIAYVYKNHSLAFVGTKSGKLKKIRVDGPRGNALQYETVQVVDPGPVLRDMAFSKDHEQLYIMSERQLTRVPVESCGQYQSCGECLGSGDPHCGWCVLHNTCTRKERCERSKEPRRFASEMKQCVRLTVHPNNISVSQYNVLLVLETYNVPELSAGVNCTFEDLSEMDGLVVGNQIQCYSPAAKEVPRIITENGDHHVVQLQLKSKETGMTFASTSFVFYNCSVHNSCLSCVESPYRCHWCKYRHVCTHDPKTCSFQEGRVKLPEDCPQLLRVDKILVPVEVIKPITLKAKNLPQPQSGQRGYECILNIQGSEQRVPALRFNSSSVQCQNTSYSYEGMEINNLPVELTVVWNGHFNIDNPAQNKVHLYKCGAMRESCGLCLKADPDFACGWCQGPGQCTLRQHCPAQESQWLELSGAKSKCTNPRITEIIPVTGPREGGTKVTIRGENLGLEFRDIASHVKVAGVECSPLVDGYIPAEQIVCEMGEAKPSQHAGFVEICVAVCRPEFMARSSQLYYFMTLTLSDLKPSRGPMSGGTQVTITGTNLNAGSNVVVMFGKQPCLFHRRSPSYIVCNTTSSDEVLEMKVSVQVDRAKIHQDLVFQYVEDPTIVRIEPEWSIVSGNTPIAVWGTHLDLIQNPQIRAKHGGKEHINICEVLNATEMTCQAPALALGPDHQSDLTERPEEFGFILDNVQSLLILNKTNFTYYPNPVFEAFGPSGILELKPGTPIILKGKNLIPPVAGGNVKLNYTVLVGEKPCTVTVSDVQLLCESPNLIGRHKVMARVGGMEYSPGMVYIAPDSPLSLPAIVSIAVAGGLLIIFIVAVLIAYKRKSRESDLTLKRLQMQMDNLESRVALECKEAFAELQTDIHELTSDLDGAGIPFLDYRTYTMRVLFPGIEDHPVLRDLEVPGYRQERVEKGLKLFAQLINNKVFLLSFIRTLESQRSFSMRDRGNVASLIMTVLQSKLEYATDVLKQLLADLIDKNLESKNHPKLLLRRTESVAEKMLTNWFTFLLYKFLKECAGEPLFSLFCAIKQQMEKGPIDAITGEARYSLSEDKLIRQQIDYKTLVLSCVSPDNANSPEVPVKILNCDTITQVKEKILDAIFKNVPCSHRPKAADMDLEWRQGSGARMILQDEDITTKIENDWKRLNTLAHYQVPDGSVVALVSKQVTAYNAVNNSTVSRTSASKYENMIRYTGSPDSLRSRTPMITPDLESGVKMWHLVKNHEHGDQKEGDRGSKMVSEIYLTRLLATKGTLQKFVDDLFETIFSTAHRGSALPLAIKYMFDFLDEQADKHGIHDPHVRHTWKSNCLPLRFWVNMIKNPQFVFDIHKNSITDACLSVVAQTFMDSCSTSEHRLGKDSPSNKLLYAKDIPSYKNWVERYYSDIGKMPAISDQDMNAYLAEQSRMHMNEFNTMSALSEIFSYVGKYSEEILGPLDHDDQCGKQKLAYKLEQVITLMSLDS.

A signal peptide spans 1-23; sequence MKAMPWNWTCLLSHLLMVGMGSS. The Sema domain occupies 24-507; that stretch reads TLLTRQPAPL…SERQLTRVPV (484 aa). The Extracellular segment spans residues 24–1237; the sequence is TLLTRQPAPL…IAPDSPLSLP (1214 aa). 10 disulfides stabilise this stretch: C95–C104, C130–C138, C284–C405, C300–C356, C374–C393, C510–C527, C516–C558, C519–C536, C530–C542, and C593–C612. The PSI 1 domain maps to 509-559; that stretch reads SCGQYQSCGECLGSGDPHCGWCVLHNTCTRKERCERSKEPRRFASEMKQCV. N655 is a glycosylation site (N-linked (GlcNAc...) asparagine). PSI domains follow at residues 655-702 and 803-856; these read NCSV…EDCP and KCGA…SKCT. IPT/TIG domains are found at residues 858-952, 954-1037, 1040-1139, and 1142-1230; these read PRIT…YYFM, LTLS…FQYV, PTIV…FTYY, and PVFE…YIAP. N1007, N1132, and N1180 each carry an N-linked (GlcNAc...) asparagine glycan. The chain crosses the membrane as a helical span at residues 1238-1258; sequence AIVSIAVAGGLLIIFIVAVLI. The Cytoplasmic segment spans residues 1259 to 1894; sequence AYKRKSRESD…QVITLMSLDS (636 aa). The residue at position 1350 (K1350) is an N6-acetyllysine.

This sequence belongs to the plexin family. Interacts with NRP1 and NRP2.

It localises to the cell membrane. Functionally, coreceptor for SEMA3A. Necessary for signaling by class 3 semaphorins and subsequent remodeling of the cytoskeleton. Plays a role in axon guidance in the developing nervous system. Class 3 semaphorins bind to a complex composed of a neuropilin and a plexin. The plexin modulates the affinity of the complex for specific semaphorins, and its cytoplasmic domain is required for the activation of down-stream signaling events in the cytoplasm. This chain is Plexin-A4 (PLXNA4), found in Homo sapiens (Human).